We begin with the raw amino-acid sequence, 304 residues long: Dihydroorotate dehydrogenase B (NAD(+)), catalytic subunit (304 aa).

FMN contacts are provided by residues Ser-22 and Lys-46–Gly-47. Residues Lys-46 and Asn-70–Leu-74 contribute to the substrate site. Positions 100 and 128 each coordinate FMN. Asn-128 contributes to the substrate binding site. Residue Cys-131 is the Nucleophile of the active site. FMN-binding residues include Lys-166 and Ile-192. Asn-193 to Thr-194 is a binding site for substrate. Residues Gly-218, Gly-244–Gly-245, and Gly-266–Thr-267 contribute to the FMN site.

The protein belongs to the dihydroorotate dehydrogenase family. Type 1 subfamily. As to quaternary structure, heterotetramer of 2 PyrK and 2 PyrD type B subunits. Requires FMN as cofactor.

It is found in the cytoplasm. The enzyme catalyses (S)-dihydroorotate + NAD(+) = orotate + NADH + H(+). Its pathway is pyrimidine metabolism; UMP biosynthesis via de novo pathway; orotate from (S)-dihydroorotate (NAD(+) route): step 1/1. Catalyzes the conversion of dihydroorotate to orotate with NAD(+) as electron acceptor. In Trichlorobacter lovleyi (strain ATCC BAA-1151 / DSM 17278 / SZ) (Geobacter lovleyi), this protein is Dihydroorotate dehydrogenase B (NAD(+)), catalytic subunit (pyrD).